The chain runs to 281 residues: 2,3,4,5-tetrahydropyridine-2,6-dicarboxylate N-succinyltransferase (281 aa).

Residues R108 and D145 each coordinate substrate.

It belongs to the transferase hexapeptide repeat family. As to quaternary structure, homotrimer.

The protein resides in the cytoplasm. The enzyme catalyses (S)-2,3,4,5-tetrahydrodipicolinate + succinyl-CoA + H2O = (S)-2-succinylamino-6-oxoheptanedioate + CoA. Its pathway is amino-acid biosynthesis; L-lysine biosynthesis via DAP pathway; LL-2,6-diaminopimelate from (S)-tetrahydrodipicolinate (succinylase route): step 1/3. This Rhodopseudomonas palustris (strain BisB5) protein is 2,3,4,5-tetrahydropyridine-2,6-dicarboxylate N-succinyltransferase.